A 491-amino-acid polypeptide reads, in one-letter code: Glycogen synthase (491 aa).

Lys-15 lines the ADP-alpha-D-glucose pocket.

This sequence belongs to the glycosyltransferase 1 family. Bacterial/plant glycogen synthase subfamily.

The catalysed reaction is [(1-&gt;4)-alpha-D-glucosyl](n) + ADP-alpha-D-glucose = [(1-&gt;4)-alpha-D-glucosyl](n+1) + ADP + H(+). It participates in glycan biosynthesis; glycogen biosynthesis. In terms of biological role, synthesizes alpha-1,4-glucan chains using ADP-glucose. This chain is Glycogen synthase, found in Treponema denticola (strain ATCC 35405 / DSM 14222 / CIP 103919 / JCM 8153 / KCTC 15104).